The sequence spans 203 residues: E3 ubiquitin-protein ligase RNF152 (203 aa).

An RING-type zinc finger spans residues cysteine 12–arginine 55. A helical membrane pass occupies residues serine 167 to leucine 187.

The protein belongs to the RNF152 family.

It localises to the lysosome membrane. It catalyses the reaction S-ubiquitinyl-[E2 ubiquitin-conjugating enzyme]-L-cysteine + [acceptor protein]-L-lysine = [E2 ubiquitin-conjugating enzyme]-L-cysteine + N(6)-ubiquitinyl-[acceptor protein]-L-lysine.. It participates in protein modification; protein ubiquitination. Its function is as follows. E3 ubiquitin-protein ligase that acts as a negative regulator of mTORC1 signaling by mediating ubiquitination of RagA/RRAGA and RHEB. Catalyzes 'Lys-63'-linked polyubiquitination of RagA/RRAGA in response to amino acid starvation, thereby regulating mTORC1 signaling. Also mediates monoubiquitination of RHEB, promoting its association with the TSC-TBC complex and subsequent inhibition. Also mediates 'Lys-48'-linked polyubiquitination of target proteins and their subsequent targeting to the proteasome for degradation. This is E3 ubiquitin-protein ligase RNF152 from Gallus gallus (Chicken).